The following is a 331-amino-acid chain: Malate dehydrogenase (331 aa).

14–20 (GAAGSIG) contacts NAD(+). Residues arginine 95 and arginine 101 each contribute to the substrate site. NAD(+)-binding positions include asparagine 108, glutamine 115, and 132–134 (VGN). The substrate site is built by asparagine 134 and arginine 165. Histidine 190 acts as the Proton acceptor in catalysis.

This sequence belongs to the LDH/MDH superfamily. MDH type 2 family.

The enzyme catalyses (S)-malate + NAD(+) = oxaloacetate + NADH + H(+). In terms of biological role, catalyzes the reversible oxidation of malate to oxaloacetate. The protein is Malate dehydrogenase of Rhodococcus opacus (strain B4).